We begin with the raw amino-acid sequence, 241 residues long: DNA repair protein RecO (241 aa).

Belongs to the RecO family.

Involved in DNA repair and RecF pathway recombination. This is DNA repair protein RecO from Orientia tsutsugamushi (strain Ikeda) (Rickettsia tsutsugamushi).